We begin with the raw amino-acid sequence, 480 residues long: Glutamate--tRNA ligase (480 aa).

Residues 21–31 carry the 'HIGH' region motif; that stretch reads PSPTGYLHVGG. Residues C110, C112, C137, and H139 each coordinate Zn(2+). The short motif at 248–252 is the 'KMSKS' region element; that stretch reads KLSKR. K251 lines the ATP pocket.

It belongs to the class-I aminoacyl-tRNA synthetase family. Glutamate--tRNA ligase type 1 subfamily. As to quaternary structure, monomer. Zn(2+) is required as a cofactor.

It localises to the cytoplasm. It catalyses the reaction tRNA(Glu) + L-glutamate + ATP = L-glutamyl-tRNA(Glu) + AMP + diphosphate. Its function is as follows. Catalyzes the attachment of glutamate to tRNA(Glu) in a two-step reaction: glutamate is first activated by ATP to form Glu-AMP and then transferred to the acceptor end of tRNA(Glu). In Haemophilus influenzae (strain PittEE), this protein is Glutamate--tRNA ligase.